A 779-amino-acid chain; its full sequence is Ribosome-releasing factor 2, mitochondrial (779 aa).

Residues 68–353 enclose the tr-type G domain; that stretch reads AKIRNIGIMA…AVTTYLPSPE (286 aa). GTP-binding positions include 77–84, 141–145, and 195–198; these read AHIDAGKT, DTPGH, and NKMD.

This sequence belongs to the TRAFAC class translation factor GTPase superfamily. Classic translation factor GTPase family. EF-G/EF-2 subfamily.

The protein localises to the mitochondrion. The enzyme catalyses GTP + H2O = GDP + phosphate + H(+). Its function is as follows. Mitochondrial GTPase that mediates the disassembly of ribosomes from messenger RNA at the termination of mitochondrial protein biosynthesis. Acts in collaboration with MRRF. GTP hydrolysis follows the ribosome disassembly and probably occurs on the ribosome large subunit. Not involved in the GTP-dependent ribosomal translocation step during translation elongation. This chain is Ribosome-releasing factor 2, mitochondrial (Gfm2), found in Rattus norvegicus (Rat).